We begin with the raw amino-acid sequence, 150 residues long: Putative F-box protein At2g33655 (150 aa).

The 47-residue stretch at 1–47 (MEKMSDLPRELVEEILSRVPVKSMREVRVTCKTWNALSKHISKAEAA) folds into the F-box domain.

The chain is Putative F-box protein At2g33655 from Arabidopsis thaliana (Mouse-ear cress).